The following is a 317-amino-acid chain: Ribosomal protein L11 methyltransferase (317 aa).

S-adenosyl-L-methionine contacts are provided by T158, G179, D201, and N244.

It belongs to the methyltransferase superfamily. PrmA family.

The protein resides in the cytoplasm. The enzyme catalyses L-lysyl-[protein] + 3 S-adenosyl-L-methionine = N(6),N(6),N(6)-trimethyl-L-lysyl-[protein] + 3 S-adenosyl-L-homocysteine + 3 H(+). Methylates ribosomal protein L11. This is Ribosomal protein L11 methyltransferase from Streptococcus pyogenes serotype M5 (strain Manfredo).